A 354-amino-acid chain; its full sequence is GTPase Obg (354 aa).

An Obg domain is found at 1 to 159 (MKYIDEAIIH…ADLKLELKVL (159 aa)). The OBG-type G domain maps to 160–334 (ADVGLLGMPN…LTYAIMEFLE (175 aa)). GTP contacts are provided by residues 166-173 (GMPNAGKS), 191-195 (FTTMH), 213-216 (DIPG), 284-287 (NKVD), and 315-317 (SAM). Mg(2+) is bound by residues S173 and T193.

This sequence belongs to the TRAFAC class OBG-HflX-like GTPase superfamily. OBG GTPase family. As to quaternary structure, monomer. Mg(2+) serves as cofactor.

It is found in the cytoplasm. Its function is as follows. An essential GTPase which binds GTP, GDP and possibly (p)ppGpp with moderate affinity, with high nucleotide exchange rates and a fairly low GTP hydrolysis rate. Plays a role in control of the cell cycle, stress response, ribosome biogenesis and in those bacteria that undergo differentiation, in morphogenesis control. The protein is GTPase Obg of Nitrosospira multiformis (strain ATCC 25196 / NCIMB 11849 / C 71).